The chain runs to 393 residues: MVSVAEIRKAQRAEGPATVLAIGTATPANCVYQADYPDYYFRITNSEHMTELKEKFKRMCEKSMINKRYMHLTEEILKENPNVCAYMAPSLDARQDMVVVEVPKLGKEAAAKAIKEWGQPKSKITHLVFCTTSGVDMPGADYQLTKLLGLKPSVKRLMMYQQGCFAGGTVLRLAKDLAENNAGSRVLVVCSEITAVTFRGPSDTHLDSLVGQALFGDGAAAVIIGADPDTKIELPLFELVSAAQTILPDSEGAIDGHLREVGLTFHLLKDVPGLISKNIEKSLVEAFTPIGISDWNSLFWIAHPGGPAILDQVELKLGLKEEKLRATRHVLSEYGNMSSACVLFILDEMRKKSIEEGKGSTGEGLEWGVLFGFGPGLTVETVVLHSVSAPAAH.

The active site involves Cys-164.

This sequence belongs to the thiolase-like superfamily. Chalcone/stilbene synthases family.

The catalysed reaction is (E)-4-coumaroyl-CoA + 3 malonyl-CoA + 3 H(+) = 2',4,4',6'-tetrahydroxychalcone + 3 CO2 + 4 CoA. Its pathway is secondary metabolite biosynthesis; flavonoid biosynthesis. Functionally, the primary product of this enzyme is 4,2',4',6'-tetrahydroxychalcone (also termed naringenin-chalcone or chalcone) which can under specific conditions spontaneously isomerize into naringenin. The sequence is that of Chalcone synthase (CHS) from Vitis vinifera (Grape).